A 71-amino-acid polypeptide reads, in one-letter code: Large ribosomal subunit protein bL31 (71 aa).

Zn(2+)-binding residues include Cys16, Cys18, Cys36, and Cys39.

This sequence belongs to the bacterial ribosomal protein bL31 family. Type A subfamily. As to quaternary structure, part of the 50S ribosomal subunit. Zn(2+) serves as cofactor.

Functionally, binds the 23S rRNA. This is Large ribosomal subunit protein bL31 from Thermotoga maritima (strain ATCC 43589 / DSM 3109 / JCM 10099 / NBRC 100826 / MSB8).